The following is a 220-amino-acid chain: MSAPAQNNAEVPTFKLVLVGDGGTGKTTFVKRHLTGEFEKKYIATIGVEVHPLSFYTNFGEIKFDVWDTAGQEKFGGLRDGYYINAQCAIIMFDVTSRITYKNVPNWHRDLVRVCENIPIVLCGNKVDVKERKVKAKTITFHRKKNLQYYDISAKSNYNFEKPFLWLARKLAGNPQLEFVASPALAPPEVQVDEQLMHQYQQEMDQATALPLPDEDDADL.

Position 2 is an N-acetylserine (S2). Position 2 is a phosphoserine (S2). One can recognise a Small GTPase Ran-type domain in the interval 10-174; sequence EVPTFKLVLV…LWLARKLAGN (165 aa). 21-28 provides a ligand contact to GTP; the sequence is DGGTGKTT. The tract at residues 40-48 is switch-I; it reads KKYIATIGV. GTP is bound by residues G71, 125-128, and 153-155; these read NKVD and SAK. Residues 71–87 form a switch-II region; that stretch reads GQEKFGGLRDGYYINAQ.

Belongs to the small GTPase superfamily. Ran family. As to quaternary structure, found in a nuclear export complex with RanGTP, exportin and pre-miRNA.

It is found in the nucleus. GTP-binding protein involved in nucleocytoplasmic transport. Required for the import of protein into the nucleus and also for RNA export. Not essential for cell viability. This is GTP-binding nuclear protein GSP2/CNR2 (GSP2) from Saccharomyces cerevisiae (strain ATCC 204508 / S288c) (Baker's yeast).